A 273-amino-acid polypeptide reads, in one-letter code: 4-hydroxy-tetrahydrodipicolinate reductase (273 aa).

NAD(+)-binding positions include 12–17 (GAGGRM) and Glu38. Residue Arg39 coordinates NADP(+). NAD(+)-binding positions include 102 to 104 (GTT) and 126 to 129 (AANF). The active-site Proton donor/acceptor is the His159. His160 is a binding site for (S)-2,3,4,5-tetrahydrodipicolinate. Catalysis depends on Lys163, which acts as the Proton donor. 169–170 (GT) is a (S)-2,3,4,5-tetrahydrodipicolinate binding site.

Belongs to the DapB family. As to quaternary structure, homotetramer.

It localises to the cytoplasm. It carries out the reaction (S)-2,3,4,5-tetrahydrodipicolinate + NAD(+) + H2O = (2S,4S)-4-hydroxy-2,3,4,5-tetrahydrodipicolinate + NADH + H(+). The enzyme catalyses (S)-2,3,4,5-tetrahydrodipicolinate + NADP(+) + H2O = (2S,4S)-4-hydroxy-2,3,4,5-tetrahydrodipicolinate + NADPH + H(+). Its pathway is amino-acid biosynthesis; L-lysine biosynthesis via DAP pathway; (S)-tetrahydrodipicolinate from L-aspartate: step 4/4. In terms of biological role, catalyzes the conversion of 4-hydroxy-tetrahydrodipicolinate (HTPA) to tetrahydrodipicolinate. The polypeptide is 4-hydroxy-tetrahydrodipicolinate reductase (Salmonella schwarzengrund (strain CVM19633)).